Consider the following 157-residue polypeptide: SsrA-binding protein (157 aa).

Residues 134–151 (HDKRETEKKRDWSKEKGR) show a composition bias toward basic and acidic residues. A disordered region spans residues 134 to 157 (HDKRETEKKRDWSKEKGRLMRAKG).

Belongs to the SmpB family.

The protein localises to the cytoplasm. Its function is as follows. Required for rescue of stalled ribosomes mediated by trans-translation. Binds to transfer-messenger RNA (tmRNA), required for stable association of tmRNA with ribosomes. tmRNA and SmpB together mimic tRNA shape, replacing the anticodon stem-loop with SmpB. tmRNA is encoded by the ssrA gene; the 2 termini fold to resemble tRNA(Ala) and it encodes a 'tag peptide', a short internal open reading frame. During trans-translation Ala-aminoacylated tmRNA acts like a tRNA, entering the A-site of stalled ribosomes, displacing the stalled mRNA. The ribosome then switches to translate the ORF on the tmRNA; the nascent peptide is terminated with the 'tag peptide' encoded by the tmRNA and targeted for degradation. The ribosome is freed to recommence translation, which seems to be the essential function of trans-translation. This chain is SsrA-binding protein, found in Rhodopseudomonas palustris (strain BisA53).